Here is a 258-residue protein sequence, read N- to C-terminus: MIQIDALPAFNDNYIWLLQDATSRRCAVVDPGDAKPVEAWLAAHPDWRLSDILVTHHHHDHVGGVAALKELTGARVLGPANEKIPARDLALEDGERVEVLGLVFEIFHVPGHTLGHIAYYHPAETPLLFCGDTLFAAGCGRLFEGTPAQMHHSLARLAALPANTRVYCTHEYTLSNLRFALAVEPDNAALRERFEEATRLRERDRITLPSEISLELSTNPFLRVSENSVKKKADQRSGQQNRTPEEVFAVLRAWKDQF.

Residues histidine 56, histidine 58, aspartate 60, histidine 61, histidine 112, aspartate 132, and histidine 170 each contribute to the Zn(2+) site.

This sequence belongs to the metallo-beta-lactamase superfamily. Glyoxalase II family. In terms of assembly, monomer. Zn(2+) serves as cofactor.

The catalysed reaction is an S-(2-hydroxyacyl)glutathione + H2O = a 2-hydroxy carboxylate + glutathione + H(+). It functions in the pathway secondary metabolite metabolism; methylglyoxal degradation; (R)-lactate from methylglyoxal: step 2/2. Its function is as follows. Thiolesterase that catalyzes the hydrolysis of S-D-lactoyl-glutathione to form glutathione and D-lactic acid. This chain is Hydroxyacylglutathione hydrolase, found in Pseudomonas aeruginosa (strain ATCC 15692 / DSM 22644 / CIP 104116 / JCM 14847 / LMG 12228 / 1C / PRS 101 / PAO1).